The following is a 287-amino-acid chain: tRNA pseudouridine synthase B (287 aa).

Residue Asp38 is the Nucleophile of the active site.

Belongs to the pseudouridine synthase TruB family. Type 1 subfamily.

The enzyme catalyses uridine(55) in tRNA = pseudouridine(55) in tRNA. Functionally, responsible for synthesis of pseudouridine from uracil-55 in the psi GC loop of transfer RNAs. The polypeptide is tRNA pseudouridine synthase B (Aquifex aeolicus (strain VF5)).